The following is a 682-amino-acid chain: Potassium-transporting ATPase ATP-binding subunit (682 aa).

Transmembrane regions (helical) follow at residues 34–54, 62–82, 219–239, and 254–274; these read PVMF…IAMA, ALFS…ANFA, IALT…TATL, and VLVA…LSAI. Aspartate 307 acts as the 4-aspartylphosphate intermediate in catalysis. ATP-binding positions include aspartate 344, glutamate 348, 377–384, and lysine 395; that span reads FTAQSRMS. Residues aspartate 518 and aspartate 522 each contribute to the Mg(2+) site. 3 helical membrane passes run 588 to 608, 616 to 636, and 656 to 676; these read FAII…LNIM, AILS…PLAL, and IYGL…DLLL.

Belongs to the cation transport ATPase (P-type) (TC 3.A.3) family. Type IA subfamily. In terms of assembly, the system is composed of three essential subunits: KdpA, KdpB and KdpC.

It localises to the cell inner membrane. It carries out the reaction K(+)(out) + ATP + H2O = K(+)(in) + ADP + phosphate + H(+). In terms of biological role, part of the high-affinity ATP-driven potassium transport (or Kdp) system, which catalyzes the hydrolysis of ATP coupled with the electrogenic transport of potassium into the cytoplasm. This subunit is responsible for energy coupling to the transport system and for the release of the potassium ions to the cytoplasm. The sequence is that of Potassium-transporting ATPase ATP-binding subunit from Escherichia fergusonii (strain ATCC 35469 / DSM 13698 / CCUG 18766 / IAM 14443 / JCM 21226 / LMG 7866 / NBRC 102419 / NCTC 12128 / CDC 0568-73).